Here is a 57-residue protein sequence, read N- to C-terminus: UPF0391 membrane protein Xaut_1725 (57 aa).

Helical transmembrane passes span 4–24 (WAVTFLVVALIAAVLGFGGIA) and 30–50 (IAKIIFFVAIVLFVISAVAGL).

This sequence belongs to the UPF0391 family.

Its subcellular location is the cell membrane. The protein is UPF0391 membrane protein Xaut_1725 of Xanthobacter autotrophicus (strain ATCC BAA-1158 / Py2).